A 115-amino-acid polypeptide reads, in one-letter code: UPF0102 protein SYO3AOP1_0546 (115 aa).

It belongs to the UPF0102 family.

This chain is UPF0102 protein SYO3AOP1_0546, found in Sulfurihydrogenibium sp. (strain YO3AOP1).